Here is a 379-residue protein sequence, read N- to C-terminus: Dual-specificity RNA methyltransferase RlmN (379 aa).

Catalysis depends on Glu95, which acts as the Proton acceptor. In terms of domain architecture, Radical SAM core spans Glu101–Asp345. A disulfide bond links Cys108 and Cys350. Positions 115, 119, and 122 each coordinate [4Fe-4S] cluster. S-adenosyl-L-methionine contacts are provided by residues Gly176–Glu177, Ser208, Ser230–His232, and Asn307. Cys350 (S-methylcysteine intermediate) is an active-site residue.

This sequence belongs to the radical SAM superfamily. RlmN family. The cofactor is [4Fe-4S] cluster.

The protein resides in the cytoplasm. It carries out the reaction adenosine(2503) in 23S rRNA + 2 reduced [2Fe-2S]-[ferredoxin] + 2 S-adenosyl-L-methionine = 2-methyladenosine(2503) in 23S rRNA + 5'-deoxyadenosine + L-methionine + 2 oxidized [2Fe-2S]-[ferredoxin] + S-adenosyl-L-homocysteine. The catalysed reaction is adenosine(37) in tRNA + 2 reduced [2Fe-2S]-[ferredoxin] + 2 S-adenosyl-L-methionine = 2-methyladenosine(37) in tRNA + 5'-deoxyadenosine + L-methionine + 2 oxidized [2Fe-2S]-[ferredoxin] + S-adenosyl-L-homocysteine. Specifically methylates position 2 of adenine 2503 in 23S rRNA and position 2 of adenine 37 in tRNAs. m2A2503 modification seems to play a crucial role in the proofreading step occurring at the peptidyl transferase center and thus would serve to optimize ribosomal fidelity. In Burkholderia ambifaria (strain MC40-6), this protein is Dual-specificity RNA methyltransferase RlmN.